Here is a 130-residue protein sequence, read N- to C-terminus: Succinate dehydrogenase cytochrome b556 subunit (130 aa).

The Cytoplasmic segment spans residues 1–26; it reads MADVNRGNRPLSPHLQVYRLPLAAIT. The helical transmembrane segment at 27–52 threads the bilayer; that stretch reads SIMTRITGHALVAGIVLITWWLVAAV. The Periplasmic segment spans residues 53–68; sequence TSPGAFACADWVVRSW. Residues 69 to 89 traverse the membrane as a helical segment; it reads LGFIILTGSMWALWYHLLAGL. Histidine 84 is a heme binding site. Over 90 to 109 the chain is Cytoplasmic; the sequence is RHLFYDAGYGLEIEQAHKSS. The helical transmembrane segment at 110-130 threads the bilayer; that stretch reads QALIAGSVVLAVLTLIVFFVF.

This sequence belongs to the cytochrome b560 family. In terms of assembly, part of an enzyme complex containing four subunits: a flavoprotein, an iron-sulfur protein, plus two membrane-anchoring proteins, SdhC and SdhD. The complex can form homotrimers. It depends on heme as a cofactor.

Its subcellular location is the cell inner membrane. It participates in carbohydrate metabolism; tricarboxylic acid cycle. In terms of biological role, membrane-anchoring subunit of succinate dehydrogenase (SDH). The polypeptide is Succinate dehydrogenase cytochrome b556 subunit (sdhC) (Paracoccus denitrificans).